Consider the following 2715-residue polypeptide: Teneurin-3 (2715 aa).

Disordered stretches follow at residues 1–38 and 142–223; these read MDVK…VPTQ and GRSS…AALP. Residues 1–309 form the Teneurin N-terminal domain; it reads MDVKERRPYC…KSSKYCSWRC (309 aa). Residues 1-310 are Cytoplasmic-facing; sequence MDVKERRPYC…SSKYCSWRCT (310 aa). The segment covering 142–153 has biased composition (low complexity); it reads GRSSCLSSRSNS. The segment covering 159 to 168 has biased composition (basic and acidic residues); that stretch reads DTEHENRSDS. Residues 171-182 show a composition bias toward polar residues; sequence EQPSNNPGQPTL. The segment covering 201 to 213 has biased composition (low complexity); sequence TSLNRNSLTNRRN. The chain crosses the membrane as a helical span at residues 311 to 331; the sequence is ALCAVGVSVLLAILLSYFIAM. Residues 332–2715 are Extracellular-facing; the sequence is HLFGLNWHLQ…FLRQSEIGKR (2384 aa). Asparagine 345, asparagine 380, and asparagine 419 each carry an N-linked (GlcNAc...) asparagine glycan. EGF-like domains follow at residues 514–545, 546–576, 578–610, 611–642, 644–677, 678–709, 710–739, and 740–783; these read SVVE…PDCS, RAAC…TECD, PTTQ…ENCE, EADC…SNCE, LKTM…PDCS, NEIC…ACNQ, RACH…EHCT, and IAHY…AGCD. Intrachain disulfides connect cysteine 518–cysteine 528, cysteine 522–cysteine 533, cysteine 535–cysteine 544, cysteine 553–cysteine 564, cysteine 566–cysteine 575, cysteine 582–cysteine 593, cysteine 587–cysteine 598, cysteine 600–cysteine 609, cysteine 614–cysteine 625, cysteine 619–cysteine 630, cysteine 632–cysteine 641, cysteine 652–cysteine 665, cysteine 667–cysteine 676, cysteine 681–cysteine 691, cysteine 685–cysteine 696, cysteine 698–cysteine 707, cysteine 712–cysteine 722, cysteine 716–cysteine 727, cysteine 729–cysteine 738, cysteine 752–cysteine 762, cysteine 756–cysteine 771, and cysteine 773–cysteine 782. N-linked (GlcNAc...) asparagine glycosylation occurs at asparagine 670. Asparagine 869 and asparagine 892 each carry an N-linked (GlcNAc...) asparagine glycan. Residues 1181–1209 form an NHL 1 repeat; it reads LLAPVALACGIDGSLYVGDFNYVRRIFPS. Asparagine 1211 carries an N-linked (GlcNAc...) asparagine glycan. NHL repeat units follow at residues 1216–1260, 1286–1330, 1347–1387, 1418–1445, and 1474–1517; these read LELR…PKSL, ARCG…NGII, CDTS…ITEN, LESA…INRI, and CYQS…VSKN. The stretch at 1527–1546 is one YD 1 repeat; that stretch reads YEVASPTDQELYIFDINGTH. 2 N-linked (GlcNAc...) asparagine glycosylation sites follow: asparagine 1543 and asparagine 1560. YD repeat units follow at residues 1563–1583, 1626–1645, and 1646–1668; these read YSND…LRIR, YHGN…WTTF, and FDYD…TNLH. 4 N-linked (GlcNAc...) asparagine glycosylation sites follow: asparagine 1656, asparagine 1693, asparagine 1751, and asparagine 1836. 18 YD repeats span residues 1839–1858, 1880–1898, 1899–1919, 1926–1943, 1944–1965, 1966–1983, 1986–2006, 2009–2029, 2037–2056, 2062–2079, 2080–2106, 2108–2121, 2122–2145, 2148–2168, 2169–2189, 2191–2211, 2223–2243, and 2245–2265; these read YSST…EKVD, YLEK…YIFE, YDMW…HTMQ, YYRN…IITD, YNEE…VLFK, YRRQ…TRVS, YDET…FICT, YRQI…DGMV, YDNS…TPLP, FDDI…GVIY, YDIN…IKEI, YEIF…ITIQ, YDNM…TKYA, YDVD…WRYN, YDLN…LTPL, YDLR…DEDG, YSSK…TVIY, and YDGL…LQFF. Asparagine 1937 is a glycosylation site (N-linked (GlcNAc...) asparagine). Asparagine 2140 carries N-linked (GlcNAc...) asparagine glycosylation. Residue asparagine 2280 is glycosylated (N-linked (GlcNAc...) asparagine). One copy of the YD 23 repeat lies at 2291–2332; that stretch reads YDLQGHLFAMEISSGDEFYIASDNTGTPLAVFSSNGLMLKQT. The N-linked (GlcNAc...) asparagine glycan is linked to asparagine 2592.

This sequence belongs to the tenascin family. Teneurin subfamily. Homodimer; disulfide-linked; to mediate homophilic cell adhesion. Most isoforms (isoform-type A and type-B) can mediate homophilic interaction. Heterodimer with either TENM1 or TENM2. May also form heterodimer with TENM4. Isoform A0B0: Does not form homodimer to mediate homophilic cell adhesion. Isoform A0B0: Heterodimer with ADGRL3. In terms of tissue distribution, in brain, expressed in highly specific regions of the postnatal brain: expressed in restricted domains of the developing hippocampal region, including proximal CA1, distal subiculum, and medial entorhinal cortex (at protein level). Expression matches with topographic connectivity between entorhinal cortex, CA1, and subiculum (at protein level). Also specifically expressed in subregions of the presubiculum, parasubiculum, medial mammillary nucleus and anteroventral thalamic nucleus that are topographically connected with subiculum or entorhinal cortex (at protein level). Expressed in neurons of the developing visual pathway (at protein level). Expressed in the dorsal and ventral lateral geniculate nucleus (dLGN and vLGN) and optic tract at birth. Expressed in ipsilateral retinal axons of terminal zones (TZs) in the developing superior colliculus (SC) throughout the first postnatal week. Expressed in the layer V of the visual caudal cortex. Expressed in the femoral and mandibular condylar cartilages. Strongly expressed in fibrous and proliferating chondrocytes. Poorly expressed in mature chondrocytes. Not expressed in hypertrophic chondrocytes.

The protein resides in the cell membrane. Its subcellular location is the cell projection. It localises to the axon. Involved in neural development by regulating the establishment of proper connectivity within the nervous system. Acts in both pre- and postsynaptic neurons in the hippocampus to control the assembly of a precise topographic projection: required in both CA1 and subicular neurons for the precise targeting of proximal CA1 axons to distal subiculum, probably by promoting homophilic cell adhesion. Promotes homophilic adhesion in a splicing isoform-dependent manner: most isoforms (isoform-type A and type-B) can mediate homophilic interaction. Promotes axon guidance. Required for proper dendrite morphogenesis and axon targeting in the vertebrate visual system, thereby playing a key role in the development of the visual pathway. Regulates the formation in ipsilateral retinal mapping to both the dorsal lateral geniculate nucleus (dLGN) and the superior colliculus (SC). May also be involved in the differentiation of the fibroblast-like cells in the superficial layer of mandibular condylar cartilage into chondrocytes. This Mus musculus (Mouse) protein is Teneurin-3.